The following is a 492-amino-acid chain: Proline--tRNA ligase (492 aa).

It belongs to the class-II aminoacyl-tRNA synthetase family. ProS type 3 subfamily. As to quaternary structure, homodimer.

Its subcellular location is the cytoplasm. It carries out the reaction tRNA(Pro) + L-proline + ATP = L-prolyl-tRNA(Pro) + AMP + diphosphate. Functionally, catalyzes the attachment of proline to tRNA(Pro) in a two-step reaction: proline is first activated by ATP to form Pro-AMP and then transferred to the acceptor end of tRNA(Pro). The protein is Proline--tRNA ligase of Flavobacterium johnsoniae (strain ATCC 17061 / DSM 2064 / JCM 8514 / BCRC 14874 / CCUG 350202 / NBRC 14942 / NCIMB 11054 / UW101) (Cytophaga johnsonae).